Consider the following 318-residue polypeptide: Ribosomal RNA small subunit methyltransferase H (318 aa).

Residues 37–39 (GGH), Asp-56, Tyr-83, Asp-104, and Gln-111 contribute to the S-adenosyl-L-methionine site. The segment at 293–318 (EEEIAENRRAAPARLRGAQRIREDAE) is disordered.

It belongs to the methyltransferase superfamily. RsmH family.

The protein localises to the cytoplasm. The catalysed reaction is cytidine(1402) in 16S rRNA + S-adenosyl-L-methionine = N(4)-methylcytidine(1402) in 16S rRNA + S-adenosyl-L-homocysteine + H(+). In terms of biological role, specifically methylates the N4 position of cytidine in position 1402 (C1402) of 16S rRNA. The sequence is that of Ribosomal RNA small subunit methyltransferase H from Streptomyces avermitilis (strain ATCC 31267 / DSM 46492 / JCM 5070 / NBRC 14893 / NCIMB 12804 / NRRL 8165 / MA-4680).